The primary structure comprises 168 residues: Ribulose bisphosphate carboxylase small subunit, chloroplastic (168 aa).

A chloroplast-targeting transit peptide spans 1 to 28 (MASIAAKSVSLRAATRRAAPVAAPADAR).

The protein belongs to the RuBisCO small chain family. As to quaternary structure, heterohexadecamer of 8 large and 8 small subunits.

It is found in the plastid. The protein localises to the chloroplast. RuBisCO catalyzes two reactions: the carboxylation of D-ribulose 1,5-bisphosphate, the primary event in carbon dioxide fixation, as well as the oxidative fragmentation of the pentose substrate. Both reactions occur simultaneously and in competition at the same active site. Although the small subunit is not catalytic it is essential for maximal activity. The protein is Ribulose bisphosphate carboxylase small subunit, chloroplastic of Chlamydomonas moewusii (Chlamydomonas eugametos).